Consider the following 436-residue polypeptide: Histidine--tRNA ligase (436 aa).

The protein belongs to the class-II aminoacyl-tRNA synthetase family. As to quaternary structure, homodimer.

Its subcellular location is the cytoplasm. It carries out the reaction tRNA(His) + L-histidine + ATP = L-histidyl-tRNA(His) + AMP + diphosphate + H(+). The protein is Histidine--tRNA ligase of Prochlorococcus marinus (strain MIT 9313).